Here is a 666-residue protein sequence, read N- to C-terminus: Pantothenate kinase 1 (666 aa).

This sequence belongs to the type II pantothenate kinase family.

It catalyses the reaction (R)-pantothenate + ATP = (R)-4'-phosphopantothenate + ADP + H(+). It participates in cofactor biosynthesis; coenzyme A biosynthesis; CoA from (R)-pantothenate: step 1/5. Regulated by feedback inhibition by malonyl-CoA. In terms of biological role, catalyzes the phosphorylation of pantothenate the first step in CoA biosynthesis. May play a role in the physiological regulation of the intracellular CoA concentration. This chain is Pantothenate kinase 1, found in Oryza sativa subsp. japonica (Rice).